Consider the following 159-residue polypeptide: Ribosomal RNA large subunit methyltransferase H (159 aa).

S-adenosyl-L-methionine-binding positions include Leu-76, Gly-108, and 127 to 132 (LSKMTY).

The protein belongs to the RNA methyltransferase RlmH family. In terms of assembly, homodimer.

The protein localises to the cytoplasm. The enzyme catalyses pseudouridine(1915) in 23S rRNA + S-adenosyl-L-methionine = N(3)-methylpseudouridine(1915) in 23S rRNA + S-adenosyl-L-homocysteine + H(+). In terms of biological role, specifically methylates the pseudouridine at position 1915 (m3Psi1915) in 23S rRNA. The polypeptide is Ribosomal RNA large subunit methyltransferase H (Ruminiclostridium cellulolyticum (strain ATCC 35319 / DSM 5812 / JCM 6584 / H10) (Clostridium cellulolyticum)).